We begin with the raw amino-acid sequence, 933 residues long: Phosphoenolpyruvate carboxylase (933 aa).

Catalysis depends on residues histidine 158 and lysine 592.

This sequence belongs to the PEPCase type 1 family. Mg(2+) serves as cofactor.

The catalysed reaction is oxaloacetate + phosphate = phosphoenolpyruvate + hydrogencarbonate. In terms of biological role, forms oxaloacetate, a four-carbon dicarboxylic acid source for the tricarboxylic acid cycle. The chain is Phosphoenolpyruvate carboxylase from Nitrosomonas eutropha (strain DSM 101675 / C91 / Nm57).